Here is a 389-residue protein sequence, read N- to C-terminus: MASYSLVESNSFGSENWCLKLQPSYKHGLLTGLSNGEIRLLDWSTGKSVQKIKASETAINDMKVIGSDFSAGHLVSSASIDAVKVFDIRTNDRIAQIQNEANSPFISLDSRHGLLACGTELQGIDAAVYIYDIRKWDTPLRSLIDSHHDDVTCIKFHPSDVNILLSGSTDGYTNIYDLKQDEEEDALHQVINYASIHSCGWLSPKRIFTLSHMETFAIHELNDKSDELKEPQPLDFGDVREIWNCDYVVDIYPGLIATGKTQENCGELCLLPFKDEKVDTENGIVIPHAHGDEVVRDIFIPAQHSNMLYSCGEDGCVKIWENKQGPLDIPENFWDYSKKMNVLGDDDREGSINLDEPLIIQKESVSTRPRKEKHKKAKKHSMKSRFKPY.

WD repeat units lie at residues 11-53 (SFGS…QKIK), 146-186 (SHHD…EEDA), and 289-330 (AHGD…LDIP). Position 351 is a phosphoserine (S351). Residues 361-389 (QKESVSTRPRKEKHKKAKKHSMKSRFKPY) form a disordered region. The segment covering 368-389 (RPRKEKHKKAKKHSMKSRFKPY) has biased composition (basic residues).

This is an uncharacterized protein from Saccharomyces cerevisiae (strain ATCC 204508 / S288c) (Baker's yeast).